Here is a 464-residue protein sequence, read N- to C-terminus: NADH-ubiquinone oxidoreductase chain 4 (464 aa).

13 helical membrane-spanning segments follow: residues 18–38, 54–74, 79–99, 102–122, 131–151, 168–188, 207–227, 239–259, 266–286, 297–317, 332–352, 375–395, and 420–440; these read LLPT…VLPT, IADI…IANW, SLLY…NFMC, MLSF…LIGL, AADY…LAIG, VVLS…GIMV, PLAG…YAII, VLYT…TSII, LKVI…LGIL, LILS…VGGI, GLLT…FSNI, TILG…MLKV, and LLMI…NGII.

It belongs to the complex I subunit 4 family.

Its subcellular location is the mitochondrion membrane. The catalysed reaction is a ubiquinone + NADH + 5 H(+)(in) = a ubiquinol + NAD(+) + 4 H(+)(out). Core subunit of the mitochondrial membrane respiratory chain NADH dehydrogenase (Complex I) that is believed to belong to the minimal assembly required for catalysis. Complex I functions in the transfer of electrons from NADH to the respiratory chain. The immediate electron acceptor for the enzyme is believed to be ubiquinone. The chain is NADH-ubiquinone oxidoreductase chain 4 (NAD4) from Candida albicans (strain SC5314 / ATCC MYA-2876) (Yeast).